A 169-amino-acid chain; its full sequence is Thaumatin-like pathogenesis-related protein 2 (169 aa).

A signal peptide spans 1 to 21 (MATSSAVLFFLLAVFAAGASA).

Belongs to the thaumatin family.

Associated with resistance against stem rust fungi. The polypeptide is Thaumatin-like pathogenesis-related protein 2 (RASTL-2) (Avena sativa (Oat)).